Here is a 665-residue protein sequence, read N- to C-terminus: Pentatricopeptide repeat-containing protein At3g02490, mitochondrial (665 aa).

The transit peptide at 1–37 (MRYQWRSLLFRSYRSSPRPFLSHHSRFQVISNSTRSF) directs the protein to the mitochondrion. PPR repeat units lie at residues 280 to 314 (DEKTYNAMARVLGKEKFLDRFQHMIEEIRSAGYEM), 315 to 349 (EMETYVRVSARFCQTKMIKEAVELFEFAMAGSISN), 352 to 388 (TPHCCSLLLKKIVTAKKLDMDLFTRTLKAYTGNGNVV), 389 to 423 (PDVMLQHVLKSLRSVDRFGQSNEVLKAMNEGGYVP), 424 to 458 (SGDLQSVIASGLSRKGKKDEANELVNFMEASGNHL), 459 to 493 (DDKAMASLVEGHCDAKDLEEASECFKKMIGKEGVS), 495 to 530 (AGYAFEKLVLAYCNSFQARDVYKLFSELVKQNQLKP), and 536 to 570 (KIMVRNLLMKKVARDGGFEEALSLLPMMRNHGFPP).

This sequence belongs to the PPR family. P subfamily.

The protein localises to the mitochondrion. In Arabidopsis thaliana (Mouse-ear cress), this protein is Pentatricopeptide repeat-containing protein At3g02490, mitochondrial.